We begin with the raw amino-acid sequence, 96 residues long: C-C motif chemokine 20 (96 aa).

A signal peptide spans 1–26 (MMCSSKNLLLAALMSVLLLHFCSKSE). 2 disulfide bridges follow: cysteine 32–cysteine 58 and cysteine 33–cysteine 74.

Belongs to the intercrine beta (chemokine CC) family.

The protein resides in the secreted. In terms of biological role, acts as a ligand for C-C chemokine receptor CCR6. Signals through binding and activation of CCR6 and induces a strong chemotactic response and mobilization of intracellular calcium ions. The ligand-receptor pair CCL20-CCR6 is responsible for the chemotaxis of dendritic cells (DC), effector/memory T-cells and B-cells and plays an important role at skin and mucosal surfaces under homeostatic and inflammatory conditions, as well as in pathology, including cancer and autoimmune diseases. CCL20 acts as a chemotactic factor that attracts lymphocytes and, slightly, neutrophils, but not monocytes. Involved in the recruitment of both the pro-inflammatory IL17 producing helper T-cells (Th17) and the regulatory T-cells (Treg) to sites of inflammation. Required for optimal migration of thymic natural regulatory T cells (nTregs) and DN1 early thymocyte progenitor cells. Positively regulates sperm motility and chemotaxis via its binding to CCR6 which triggers Ca2+ mobilization in the sperm which is important for its motility. May be involved in formation and function of the mucosal lymphoid tissues by attracting lymphocytes and dendritic cells towards epithelial cells. This Bos taurus (Bovine) protein is C-C motif chemokine 20 (CCL20).